Here is a 196-residue protein sequence, read N- to C-terminus: 7-methyl-GTP pyrophosphatase (196 aa).

The Proton acceptor role is filled by Asp-72.

The protein belongs to the Maf family. YceF subfamily. A divalent metal cation is required as a cofactor.

It localises to the cytoplasm. The catalysed reaction is N(7)-methyl-GTP + H2O = N(7)-methyl-GMP + diphosphate + H(+). In terms of biological role, nucleoside triphosphate pyrophosphatase that hydrolyzes 7-methyl-GTP (m(7)GTP). May have a dual role in cell division arrest and in preventing the incorporation of modified nucleotides into cellular nucleic acids. The polypeptide is 7-methyl-GTP pyrophosphatase (Neisseria meningitidis serogroup B (strain ATCC BAA-335 / MC58)).